The primary structure comprises 1233 residues: Mitogen-activated protein kinase kinase kinase kinase 4 (1233 aa).

The residue at position 2 (alanine 2) is an N-acetylalanine. Residue serine 5 is modified to Phosphoserine. The Protein kinase domain maps to 25-289 (FELVEVVGNG…EQLLKHPFIR (265 aa)). ATP is bound by residues 31–39 (VGNGTYGQV) and lysine 53. Catalysis depends on aspartate 152, which acts as the Proton acceptor. 3 disordered regions span residues 305-348 (IDRT…VPGE), 401-463 (QKEQ…VERE), and 489-805 (QAML…ETES). Positions 316–337 (DETEYEYSGSEEEEEEVPEQEG) are enriched in acidic residues. Phosphoserine is present on residues serine 323 and serine 325. Over residues 521–537 (PEPKPHYDPADRAREVQ) the composition is skewed to basic and acidic residues. Position 543 is a phosphoserine (serine 543). Positions 544–559 (LKNNVSPVSRSHSFSD) are enriched in polar residues. Phosphoserine is present on residues serine 619, serine 621, serine 629, and serine 646. Positions 654-663 (LLWERVEKLV) are enriched in basic and acidic residues. Positions 666-692 (PGSGSSSGSSNSGSQPGSHPGSQSGSG) are enriched in low complexity. Serine 691, serine 703, and serine 706 each carry phosphoserine. Composition is skewed to basic and acidic residues over residues 713–726 (SAAK…EVFR) and 741–756 (KELR…HKVT). A compositionally biased stretch (acidic residues) spans 766-781 (GTTDEEEEDVEQEGAD). Over residues 783–803 (STSGPEDTRAASSPNLSNGET) the composition is skewed to polar residues. Residues serine 785, serine 794, serine 795, serine 799, and serine 817 each carry the phosphoserine modification. At threonine 822 the chain carries Phosphothreonine. Serine 846, serine 849, serine 894, and serine 907 each carry phosphoserine. The tract at residues 852–1206 (PFIDPRLLQI…LKFLCGRNDK (355 aa)) is mediates interaction with RAP2A. Positions 920 to 1207 (NSEILCAALW…KFLCGRNDKV (288 aa)) constitute a CNH domain.

Belongs to the protein kinase superfamily. STE Ser/Thr protein kinase family. STE20 subfamily. In terms of assembly, interacts with the SH3 domain of the adapter proteins Nck. Interacts (via its CNH regulatory domain) with ATL1 (via the N-terminal region). Interacts with RAP2A (GTP-bound form preferentially). It depends on Mg(2+) as a cofactor. In terms of tissue distribution, appears to be ubiquitous, expressed in all tissue types examined. Highest levels observed in heart and brain.

Its subcellular location is the cytoplasm. It catalyses the reaction L-seryl-[protein] + ATP = O-phospho-L-seryl-[protein] + ADP + H(+). It carries out the reaction L-threonyl-[protein] + ATP = O-phospho-L-threonyl-[protein] + ADP + H(+). In terms of biological role, serine/threonine kinase that plays a role in the response to environmental stress and cytokines such as TNF-alpha. Appears to act upstream of the JUN N-terminal pathway. Activator of the Hippo signaling pathway which plays a pivotal role in organ size control and tumor suppression by restricting proliferation and promoting apoptosis. MAP4Ks act in parallel to and are partially redundant with STK3/MST2 and STK4/MST2 in the phosphorylation and activation of LATS1/2, and establish MAP4Ks as components of the expanded Hippo pathway. Phosphorylates SMAD1 on Thr-322. This is Mitogen-activated protein kinase kinase kinase kinase 4 (Map4k4) from Mus musculus (Mouse).